We begin with the raw amino-acid sequence, 198 residues long: V-type proton ATPase subunit E (198 aa).

Belongs to the V-ATPase E subunit family.

Produces ATP from ADP in the presence of a proton gradient across the membrane. In Borrelia duttonii (strain Ly), this protein is V-type proton ATPase subunit E.